We begin with the raw amino-acid sequence, 262 residues long: Type II restriction enzyme MspI (262 aa).

It carries out the reaction Endonucleolytic cleavage of DNA to give specific double-stranded fragments with terminal 5'-phosphates.. Functionally, a P subtype restriction enzyme that recognizes the double-stranded sequence 5'-CCGG-3' and cleaves after C-1. The polypeptide is Type II restriction enzyme MspI (mspIR) (Moraxella sp).